Here is a 320-residue protein sequence, read N- to C-terminus: Bifunctional protein FolD 2 (320 aa).

NADP(+) contacts are provided by residues 173–175 and I242; that span reads GRS.

Belongs to the tetrahydrofolate dehydrogenase/cyclohydrolase family. As to quaternary structure, homodimer.

It catalyses the reaction (6R)-5,10-methylene-5,6,7,8-tetrahydrofolate + NADP(+) = (6R)-5,10-methenyltetrahydrofolate + NADPH. The enzyme catalyses (6R)-5,10-methenyltetrahydrofolate + H2O = (6R)-10-formyltetrahydrofolate + H(+). The protein operates within one-carbon metabolism; tetrahydrofolate interconversion. In terms of biological role, catalyzes the oxidation of 5,10-methylenetetrahydrofolate to 5,10-methenyltetrahydrofolate and then the hydrolysis of 5,10-methenyltetrahydrofolate to 10-formyltetrahydrofolate. This is Bifunctional protein FolD 2 from Rubrobacter xylanophilus (strain DSM 9941 / JCM 11954 / NBRC 16129 / PRD-1).